The chain runs to 144 residues: Giant hemoglobin AIII chain (144 aa).

The Globin domain maps to 2 to 144 (ECGPLQRLKV…DVITGGIQGN (143 aa)). A heme b-binding site is contributed by histidine 95.

It belongs to the globin family. Giant hemoglobin is composed of four heme-containing chains (AI to AIV), and two linker chains (AV and AVI).

The protein is Giant hemoglobin AIII chain of Lamellibrachia sp. (Deep-sea giant tube worm).